A 113-amino-acid polypeptide reads, in one-letter code: uncharacterized protein (113 aa).

The segment at 28-55 is disordered; sequence CDGGPRRPLSRRGEEARRARAPSYEEQE.

This is an uncharacterized protein from Human cytomegalovirus (strain AD169) (HHV-5).